A 157-amino-acid polypeptide reads, in one-letter code: Phosphopantetheine adenylyltransferase (157 aa).

Thr8 is a substrate binding site. ATP contacts are provided by residues 8–9 (TF) and His16. Substrate is bound by residues Lys40, Thr72, and Arg86. ATP-binding positions include 87–89 (GLR), Glu97, and 122–128 (YSFLSSS).

It belongs to the bacterial CoaD family. In terms of assembly, homohexamer. Requires Mg(2+) as cofactor.

It localises to the cytoplasm. It catalyses the reaction (R)-4'-phosphopantetheine + ATP + H(+) = 3'-dephospho-CoA + diphosphate. It participates in cofactor biosynthesis; coenzyme A biosynthesis; CoA from (R)-pantothenate: step 4/5. In terms of biological role, reversibly transfers an adenylyl group from ATP to 4'-phosphopantetheine, yielding dephospho-CoA (dPCoA) and pyrophosphate. The polypeptide is Phosphopantetheine adenylyltransferase (Prochlorococcus marinus (strain MIT 9312)).